The following is a 561-amino-acid chain: 3-hydroxy-3-methylglutaryl-coenzyme A reductase 3 (561 aa).

2 helical membrane passes run 25 to 45 and 69 to 89; these read PIRH…AYLM and IFGL…AFVQ. The tract at residues 90-145 is linker; it reads SIVSSSDDEEEDFLVGPARGSSAAAAVAPPPPPSSPAQCSLLGSPHDDAARERMPE. Positions 113-146 are disordered; that stretch reads AAAVAPPPPPSSPAQCSLLGSPHDDAARERMPEE. The segment covering 134-143 has biased composition (basic and acidic residues); sequence PHDDAARERM. The catalytic stretch occupies residues 146-561; sequence EDEEIVSSVV…SSKDMSKVIS (416 aa). The active-site Charge relay system is the E240. The N-linked (GlcNAc...) asparagine glycan is linked to N304. Active-site charge relay system residues include K372 and D448. The active-site Proton donor is the H546. N-linked (GlcNAc...) asparagine glycosylation is present at N550.

The protein belongs to the HMG-CoA reductase family.

It localises to the endoplasmic reticulum membrane. It catalyses the reaction (R)-mevalonate + 2 NADP(+) + CoA = (3S)-3-hydroxy-3-methylglutaryl-CoA + 2 NADPH + 2 H(+). It participates in metabolic intermediate biosynthesis; (R)-mevalonate biosynthesis; (R)-mevalonate from acetyl-CoA: step 3/3. In terms of biological role, catalyzes the synthesis of mevalonate. The specific precursor of all isoprenoid compounds present in plants. In Oryza sativa subsp. japonica (Rice), this protein is 3-hydroxy-3-methylglutaryl-coenzyme A reductase 3 (HMG3).